A 334-amino-acid chain; its full sequence is Glyceraldehyde-3-phosphate dehydrogenase (334 aa).

Residues 12 to 13 (RI), Asp-35, Arg-79, and Ser-121 contribute to the NAD(+) site. D-glyceraldehyde 3-phosphate is bound by residues 152 to 154 (SCT), Thr-183, Arg-198, 211 to 212 (TG), and Arg-234. Cys-153 acts as the Nucleophile in catalysis. Position 315 (Asn-315) interacts with NAD(+).

It belongs to the glyceraldehyde-3-phosphate dehydrogenase family. As to quaternary structure, homotetramer.

The protein resides in the cytoplasm. It carries out the reaction D-glyceraldehyde 3-phosphate + phosphate + NAD(+) = (2R)-3-phospho-glyceroyl phosphate + NADH + H(+). It participates in carbohydrate degradation; glycolysis; pyruvate from D-glyceraldehyde 3-phosphate: step 1/5. Its function is as follows. Catalyzes the oxidative phosphorylation of glyceraldehyde 3-phosphate (G3P) to 1,3-bisphosphoglycerate (BPG) using the cofactor NAD. The first reaction step involves the formation of a hemiacetal intermediate between G3P and a cysteine residue, and this hemiacetal intermediate is then oxidized to a thioester, with concomitant reduction of NAD to NADH. The reduced NADH is then exchanged with the second NAD, and the thioester is attacked by a nucleophilic inorganic phosphate to produce BPG. This is Glyceraldehyde-3-phosphate dehydrogenase (gap) from Corynebacterium glutamicum (strain ATCC 13032 / DSM 20300 / JCM 1318 / BCRC 11384 / CCUG 27702 / LMG 3730 / NBRC 12168 / NCIMB 10025 / NRRL B-2784 / 534).